We begin with the raw amino-acid sequence, 430 residues long: Xaa-Pro aminopeptidase (430 aa).

Residues Asp254, Asp265, His348, Glu377, and Glu400 each coordinate Mn(2+).

The protein belongs to the peptidase M24B family. As to quaternary structure, homotetramer. Requires Mn(2+) as cofactor.

It catalyses the reaction Release of any N-terminal amino acid, including proline, that is linked to proline, even from a dipeptide or tripeptide.. The chain is Xaa-Pro aminopeptidase (pepP) from Haemophilus influenzae (strain ATCC 51907 / DSM 11121 / KW20 / Rd).